Here is a 927-residue protein sequence, read N- to C-terminus: LPS-assembly protein LptD (927 aa).

The first 22 residues, 1–22 (MALKSPAFRKKFPLLVTGSLLA), serve as a signal peptide directing secretion. The tract at residues 60-100 (LPPRPVHSTASVSSNGTVTSESSSSGEQVAGPQLVTEAKGK) is disordered. The segment covering 70–86 (SVSSNGTVTSESSSSGE) has biased composition (low complexity).

This sequence belongs to the LptD family. As to quaternary structure, component of the lipopolysaccharide transport and assembly complex. Interacts with LptE and LptA.

Its subcellular location is the cell outer membrane. In terms of biological role, together with LptE, is involved in the assembly of lipopolysaccharide (LPS) at the surface of the outer membrane. This is LPS-assembly protein LptD from Pseudomonas syringae pv. tomato (strain ATCC BAA-871 / DC3000).